The following is a 418-amino-acid chain: Histidine--tRNA ligase (418 aa).

It belongs to the class-II aminoacyl-tRNA synthetase family. Homodimer.

Its subcellular location is the cytoplasm. It catalyses the reaction tRNA(His) + L-histidine + ATP = L-histidyl-tRNA(His) + AMP + diphosphate + H(+). The polypeptide is Histidine--tRNA ligase (Thermoanaerobacter sp. (strain X514)).